A 250-amino-acid polypeptide reads, in one-letter code: Ubiquinone/menaquinone biosynthesis C-methyltransferase UbiE (250 aa).

Residues Thr74, Asp94, 122–123 (DA), and Ser139 contribute to the S-adenosyl-L-methionine site.

This sequence belongs to the class I-like SAM-binding methyltransferase superfamily. MenG/UbiE family.

It catalyses the reaction a 2-demethylmenaquinol + S-adenosyl-L-methionine = a menaquinol + S-adenosyl-L-homocysteine + H(+). The catalysed reaction is a 2-methoxy-6-(all-trans-polyprenyl)benzene-1,4-diol + S-adenosyl-L-methionine = a 5-methoxy-2-methyl-3-(all-trans-polyprenyl)benzene-1,4-diol + S-adenosyl-L-homocysteine + H(+). Its pathway is quinol/quinone metabolism; menaquinone biosynthesis; menaquinol from 1,4-dihydroxy-2-naphthoate: step 2/2. It functions in the pathway cofactor biosynthesis; ubiquinone biosynthesis. Its function is as follows. Methyltransferase required for the conversion of demethylmenaquinol (DMKH2) to menaquinol (MKH2) and the conversion of 2-polyprenyl-6-methoxy-1,4-benzoquinol (DDMQH2) to 2-polyprenyl-3-methyl-6-methoxy-1,4-benzoquinol (DMQH2). The polypeptide is Ubiquinone/menaquinone biosynthesis C-methyltransferase UbiE (Cereibacter sphaeroides (strain ATCC 17029 / ATH 2.4.9) (Rhodobacter sphaeroides)).